The following is a 115-amino-acid chain: Class I hydrophobin C (115 aa).

A signal peptide spans 1–19 (MFSRVLVAALVALPVLVSA). 4 cysteine pairs are disulfide-bonded: Cys-36-Cys-93, Cys-43-Cys-87, Cys-44-Cys-74, and Cys-94-Cys-108.

The protein belongs to the fungal hydrophobin family. In terms of assembly, self-assembles to form functional amyloid fibrils called rodlets. Self-assembly into fibrillar rodlets occurs spontaneously at hydrophobic:hydrophilic interfaces and the rodlets further associate laterally to form amphipathic monolayers.

It localises to the secreted. Its subcellular location is the cell wall. Its function is as follows. Aerial growth, conidiation, and dispersal of filamentous fungi in the environment rely upon a capability of their secreting small amphipathic proteins called hydrophobins (HPBs) with low sequence identity. Class I can self-assemble into an outermost layer of rodlet bundles on aerial cell surfaces, conferring cellular hydrophobicity that supports fungal growth, development and dispersal; whereas Class II form highly ordered films at water-air interfaces through intermolecular interactions but contribute nothing to the rodlet structure. The sequence is that of Class I hydrophobin C from Agaricus bisporus (White button mushroom).